The sequence spans 131 residues: uncharacterized protein (131 aa).

This is an uncharacterized protein from Methanocaldococcus jannaschii (strain ATCC 43067 / DSM 2661 / JAL-1 / JCM 10045 / NBRC 100440) (Methanococcus jannaschii).